We begin with the raw amino-acid sequence, 340 residues long: Formimidoylglutamase (340 aa).

Positions 129, 160, 162, 164, 257, and 259 each coordinate Mn(2+).

The protein belongs to the arginase family. The cofactor is Mn(2+).

The catalysed reaction is N-formimidoyl-L-glutamate + H2O = formamide + L-glutamate. It participates in amino-acid degradation; L-histidine degradation into L-glutamate; L-glutamate from N-formimidoyl-L-glutamate (hydrolase route): step 1/1. Its function is as follows. Catalyzes the conversion of N-formimidoyl-L-glutamate to L-glutamate and formamide. This chain is Formimidoylglutamase, found in Vibrio parahaemolyticus serotype O3:K6 (strain RIMD 2210633).